We begin with the raw amino-acid sequence, 81 residues long: Delta-actitoxin-Aeq2d (81 aa).

A signal peptide spans 1 to 19; it reads MNRLMILVFAAVILALASA. Residues 20 to 25 constitute a propeptide that is removed on maturation; the sequence is DDVDIA. 3 cysteine pairs are disulfide-bonded: C31/C78, C33/C68, and C61/C79.

Belongs to the sea anemone sodium channel inhibitory toxin family. Type I subfamily.

It is found in the secreted. The protein resides in the nematocyst. Functionally, binds specifically to voltage-gated sodium channels (Nav), thereby delaying their inactivation during signal transduction. Causes death to crabs. This chain is Delta-actitoxin-Aeq2d, found in Actinia equina (Beadlet anemone).